The chain runs to 547 residues: Vacuolar fusion protein MON1 homolog B (547 aa).

Met-1 is modified (N-acetylmethionine). The segment covering 1–15 has biased composition (low complexity); it reads MEVGGDTAAPAPGGA. The tract at residues 1 to 106 is disordered; it reads MEVGGDTAAP…GGDPSDEEWR (106 aa). Phosphoserine occurs at positions 59 and 61.

The protein belongs to the MON1/SAND family. In terms of assembly, interacts with CCNT2; down-regulates CCNT2-mediated activation of viral promoters during herpes simplex virus 1/HHV-1 infection. Found in a complex with RMC1, CCZ1 MON1A and MON1B.

The sequence is that of Vacuolar fusion protein MON1 homolog B (MON1B) from Homo sapiens (Human).